Consider the following 319-residue polypeptide: Ribosomal RNA small subunit methyltransferase H (319 aa).

S-adenosyl-L-methionine contacts are provided by residues 39–41 (GGH), Asp-59, Phe-83, Asp-104, and Gln-111.

Belongs to the methyltransferase superfamily. RsmH family.

It is found in the cytoplasm. It catalyses the reaction cytidine(1402) in 16S rRNA + S-adenosyl-L-methionine = N(4)-methylcytidine(1402) in 16S rRNA + S-adenosyl-L-homocysteine + H(+). Specifically methylates the N4 position of cytidine in position 1402 (C1402) of 16S rRNA. This is Ribosomal RNA small subunit methyltransferase H from Ralstonia nicotianae (strain ATCC BAA-1114 / GMI1000) (Ralstonia solanacearum).